Consider the following 339-residue polypeptide: Isopentenyl-diphosphate delta-isomerase (339 aa).

7 to 8 (RK) contributes to the substrate binding site. FMN is bound by residues serine 65, 66-68 (SMT), serine 96, and asparagine 125. Substrate is bound at residue 96-98 (SQR). Residue glutamine 160 coordinates substrate. Glutamate 161 provides a ligand contact to Mg(2+). FMN is bound by residues lysine 192, threonine 222, and 293–294 (AG).

This sequence belongs to the IPP isomerase type 2 family. In terms of assembly, homooctamer. Dimer of tetramers. FMN serves as cofactor. NADPH is required as a cofactor. It depends on Mg(2+) as a cofactor.

It is found in the cytoplasm. The catalysed reaction is isopentenyl diphosphate = dimethylallyl diphosphate. In terms of biological role, involved in the biosynthesis of isoprenoids. Catalyzes the 1,3-allylic rearrangement of the homoallylic substrate isopentenyl (IPP) to its allylic isomer, dimethylallyl diphosphate (DMAPP). The chain is Isopentenyl-diphosphate delta-isomerase from Vibrio campbellii (strain ATCC BAA-1116).